The primary structure comprises 727 residues: YTH domain-containing protein 1 (727 aa).

The segment covering 1–12 (MAADSREEKDGE) has biased composition (basic and acidic residues). Residues 1 to 338 (MAADSREEKD…KHEKLSSSVR (338 aa)) are disordered. Phosphoserine is present on S35. The segment covering 50–59 (DRMESTDTKR) has biased composition (basic and acidic residues). Residues 63 to 90 (SVHSRQLVSKPLSSSVSNNKRIVSTKGK) show a composition bias toward polar residues. Basic and acidic residues predominate over residues 91-115 (SATEYKNEEYQRSERNKRLDADRKI). K96 participates in a covalent cross-link: Glycyl lysine isopeptide (Lys-Gly) (interchain with G-Cter in SUMO2). Residues S118 and S120 each carry the phosphoserine modification. Residues 124 to 144 (EPYKNQPEKTCVRKRDPERRA) show a composition bias toward basic and acidic residues. Position 146 is a phosphoserine (S146). T148 bears the Phosphothreonine mark. 2 stretches are compositionally biased toward basic and acidic residues: residues 151 to 163 (GSER…DRRA) and 170 to 185 (SKEE…DHET). The segment covering 199–254 (ENEEEGVEEDVEEDEEVEEDAEEDEEVDEDGEEEEEEEEEEEEEEEEEEEEYEQDE) has biased composition (acidic residues). Basic and acidic residues predominate over residues 255 to 270 (RDQKEEGNDYDTRSEA). The segment covering 280 to 289 (FTDGSVRSGS) has biased composition (polar residues). Phosphoserine occurs at positions 308, 315, 317, 318, and 320. The span at 315–325 (SGSSASESYAG) shows a compositional bias: low complexity. In terms of domain architecture, YTH spans 355–492 (ARFFLIKSNN…ECGTQLCLLF (138 aa)). RNA-binding positions include 361–363 (KSN) and 377–378 (WS). At S424 the chain carries Phosphoserine. An RNA-binding site is contributed by W428. S435 is subject to Phosphoserine. D476 serves as a coordination point for RNA. The span at 508 to 523 (RHKRRMHSQPRSRGRP) shows a compositional bias: basic residues. Disordered stretches follow at residues 508 to 564 (RHKR…PGYL), 607 to 643 (GMPP…HPVP), and 669 to 727 (AVVS…RYRR). The span at 524-564 (SRREPVRDVGRRRPEDYDIHNSRKKPRIDYPPEFHQRPGYL) shows a compositional bias: basic and acidic residues. The residue at position 545 (S545) is a Phosphoserine. The span at 679–727 (RERDRERERDRPRDNRRDRERDRGRDRERERERLCDRDRDRGERGRYRR) shows a compositional bias: basic and acidic residues.

Interacts with SRSF1. Interacts with SRSF2. Interacts with SRSF3. Interacts with SRSF7. Interacts with SRSF10. Interacts with CPSF6. Interacts with KHDRBS1/SAM68. Interacts with TRA2B. Interacts with KHDRBS3. Interacts with EMD. Interacts with RBMX. Interacts with ZCCHC8. In terms of processing, tyrosine phosphorylated.

It localises to the nucleus. Its subcellular location is the nucleus speckle. Its function is as follows. Regulator of alternative splicing that specifically recognizes and binds N6-methyladenosine (m6A)-containing RNAs. M6A is a modification present at internal sites of mRNAs and some non-coding RNAs and plays a role in the efficiency of mRNA splicing, processing and stability. Acts as a key regulator of exon-inclusion or exon-skipping during alternative splicing via interaction with mRNA splicing factors SRSF3 and SRSF10. Specifically binds m6A-containing mRNAs and promotes recruitment of SRSF3 to its mRNA-binding elements adjacent to m6A sites, leading to exon-inclusion during alternative splicing. In contrast, interaction with SRSF3 prevents interaction with SRSF10, a splicing factor that promotes exon skipping: this prevents SRSF10 from binding to its mRNA-binding sites close to m6A-containing regions, leading to inhibit exon skipping during alternative splicing. May also regulate alternative splice site selection. Also involved in nuclear export of m6A-containing mRNAs via interaction with SRSF3: interaction with SRSF3 facilitates m6A-containing mRNA-binding to both SRSF3 and NXF1, promoting mRNA nuclear export. Involved in S-adenosyl-L-methionine homeostasis by regulating expression of MAT2A transcripts, probably by binding m6A-containing MAT2A mRNAs. Also recognizes and binds m6A on other RNA molecules. Involved in random X inactivation mediated by Xist RNA: recognizes and binds m6A-containing Xist and promotes transcription repression activity of Xist. Also recognizes and binds m6A-containing single-stranded DNA. Involved in germline development: required for spermatogonial development in males and oocyte growth and maturation in females, probably via its role in alternative splicing. The chain is YTH domain-containing protein 1 from Homo sapiens (Human).